The chain runs to 70 residues: Small ribosomal subunit protein bS21B (70 aa).

The protein belongs to the bacterial ribosomal protein bS21 family.

The chain is Small ribosomal subunit protein bS21B from Cupriavidus metallidurans (strain ATCC 43123 / DSM 2839 / NBRC 102507 / CH34) (Ralstonia metallidurans).